The following is a 654-amino-acid chain: tRNA 5-methylaminomethyl-2-thiouridine biosynthesis bifunctional protein MnmC (654 aa).

Residues 1 to 236 are tRNA (mnm(5)s(2)U34)-methyltransferase; that stretch reads MTDRIVPATL…KRAMLVGEFA (236 aa). The interval 260–654 is FAD-dependent cmnm(5)s(2)U34 oxidoreductase; the sequence is IGAGLAGCAA…IRALRRGRVA (395 aa).

The protein in the N-terminal section; belongs to the methyltransferase superfamily. tRNA (mnm(5)s(2)U34)-methyltransferase family. It in the C-terminal section; belongs to the DAO family. FAD is required as a cofactor.

Its subcellular location is the cytoplasm. The enzyme catalyses 5-aminomethyl-2-thiouridine(34) in tRNA + S-adenosyl-L-methionine = 5-methylaminomethyl-2-thiouridine(34) in tRNA + S-adenosyl-L-homocysteine + H(+). Catalyzes the last two steps in the biosynthesis of 5-methylaminomethyl-2-thiouridine (mnm(5)s(2)U) at the wobble position (U34) in tRNA. Catalyzes the FAD-dependent demodification of cmnm(5)s(2)U34 to nm(5)s(2)U34, followed by the transfer of a methyl group from S-adenosyl-L-methionine to nm(5)s(2)U34, to form mnm(5)s(2)U34. The sequence is that of tRNA 5-methylaminomethyl-2-thiouridine biosynthesis bifunctional protein MnmC from Burkholderia thailandensis (strain ATCC 700388 / DSM 13276 / CCUG 48851 / CIP 106301 / E264).